The sequence spans 906 residues: Cadherin-2 (906 aa).

The signal sequence occupies residues 1-25; sequence MCRIAGALRTLLPLLAALLQASVEA. A propeptide spanning residues 26–159 is cleaved from the precursor; sequence SGEIALCKTG…HSGHLQRQKR (134 aa). Phosphoserine; by FAM20C occurs at positions 96 and 135. Cadherin domains lie at 160–267, 268–382, 383–497, 498–603, and 604–714; these read DWVI…RPEF, LHQV…PPEF, TAMT…NPYF, APNP…DNAP, and QVLP…DVDR. At 160–724 the chain is on the extracellular side; it reads DWVIPPINLP…IVGAGLGTGA (565 aa). Residue glutamate 170 coordinates Ca(2+). N-linked (GlcNAc...) asparagine glycosylation occurs at asparagine 190. 7 residues coordinate Ca(2+): aspartate 226, glutamate 228, aspartate 259, methionine 260, asparagine 261, aspartate 262, and asparagine 263. N-linked (GlcNAc...) asparagine glycosylation occurs at asparagine 273. Ca(2+)-binding residues include aspartate 293, aspartate 295, and asparagine 301. Asparagine 325 carries an N-linked (GlcNAc...) asparagine glycan. Residue aspartate 353 participates in Ca(2+) binding. 4 N-linked (GlcNAc...) asparagine glycosylation sites follow: asparagine 402, asparagine 572, asparagine 651, and asparagine 692. A helical membrane pass occupies residues 725–745; that stretch reads IIAILLCIIILLILVLMFVVW. The Cytoplasmic segment spans residues 746–906; the sequence is MKRRDKERQA…LADMYGGGDD (161 aa). The segment covering 863–880 has biased composition (low complexity); sequence SGSTAGSLSSLNSSSSGG. Residues 863 to 884 form a disordered region; it reads SGSTAGSLSSLNSSSSGGEQDY.

In terms of assembly, homodimer (via extracellular region). Can also form heterodimers with other cadherins (via extracellular region). Dimerization occurs in trans, i.e. with a cadherin chain from another cell. Interacts with CDCP1. Interacts with PCDH8; this complex may also include TAOK2. The interaction with PCDH8 may lead to internalization through TAOK2/p38 MAPK pathway. Identified in a complex containing FGFR4, NCAM1, CDH2, PLCG1, FRS2, SRC, SHC1, GAP43 and CTTN. May interact with OBSCN (via protein kinase domain 2). Interacts with FBXO45. Post-translationally, cleaved by MMP24. Ectodomain cleavage leads to the generation of a soluble 90 kDa N-terminal soluble fragment and a 45 kDa membrane-bound C-terminal fragment 1 (CTF1), which is further cleaved by gamma-secretase into a 35 kDa. Cleavage in neural stem cells by MMP24 affects CDH2-mediated anchorage of neural stem cells to ependymocytes in the adult subependymal zone, leading to modulate neural stem cell quiescence. May be phosphorylated by OBSCN.

It is found in the cell membrane. The protein resides in the sarcolemma. Its subcellular location is the cell junction. The protein localises to the cell surface. It localises to the desmosome. It is found in the adherens junction. Functionally, calcium-dependent cell adhesion protein; preferentially mediates homotypic cell-cell adhesion by dimerization with a CDH2 chain from another cell. Cadherins may thus contribute to the sorting of heterogeneous cell types. Acts as a regulator of neural stem cells quiescence by mediating anchorage of neural stem cells to ependymocytes in the adult subependymal zone: upon cleavage by MMP24, CDH2-mediated anchorage is affected, leading to modulate neural stem cell quiescence. Plays a role in cell-to-cell junction formation between pancreatic beta cells and neural crest stem (NCS) cells, promoting the formation of processes by NCS cells. Required for proper neurite branching. Required for pre- and postsynaptic organization. CDH2 may be involved in neuronal recognition mechanism. In hippocampal neurons, may regulate dendritic spine density. This chain is Cadherin-2 (CDH2), found in Homo sapiens (Human).